The following is a 259-amino-acid chain: Acyl-[acyl-carrier-protein]--UDP-N-acetylglucosamine O-acyltransferase (259 aa).

Belongs to the transferase hexapeptide repeat family. LpxA subfamily. In terms of assembly, homotrimer.

Its subcellular location is the cytoplasm. It carries out the reaction a (3R)-hydroxyacyl-[ACP] + UDP-N-acetyl-alpha-D-glucosamine = a UDP-3-O-[(3R)-3-hydroxyacyl]-N-acetyl-alpha-D-glucosamine + holo-[ACP]. It functions in the pathway glycolipid biosynthesis; lipid IV(A) biosynthesis; lipid IV(A) from (3R)-3-hydroxytetradecanoyl-[acyl-carrier-protein] and UDP-N-acetyl-alpha-D-glucosamine: step 1/6. In terms of biological role, involved in the biosynthesis of lipid A, a phosphorylated glycolipid that anchors the lipopolysaccharide to the outer membrane of the cell. The chain is Acyl-[acyl-carrier-protein]--UDP-N-acetylglucosamine O-acyltransferase from Psychrobacter arcticus (strain DSM 17307 / VKM B-2377 / 273-4).